The following is a 243-amino-acid chain: Large ribosomal subunit protein uL2 (243 aa).

A disordered region spans residues 198 to 243; the sequence is VDHPFGGGGRQHPGKPKSVSRDTPPGRKVGDIASKRTGRGGKGGQE. Basic and acidic residues predominate over residues 221–231; the sequence is PPGRKVGDIAS.

The protein belongs to the universal ribosomal protein uL2 family. As to quaternary structure, part of the 50S ribosomal subunit. Forms a bridge to the 30S subunit in the 70S ribosome.

Functionally, one of the primary rRNA binding proteins. Required for association of the 30S and 50S subunits to form the 70S ribosome, for tRNA binding and peptide bond formation. It has been suggested to have peptidyltransferase activity; this is somewhat controversial. Makes several contacts with the 16S rRNA in the 70S ribosome. This is Large ribosomal subunit protein uL2 from Natronomonas pharaonis (strain ATCC 35678 / DSM 2160 / CIP 103997 / JCM 8858 / NBRC 14720 / NCIMB 2260 / Gabara) (Halobacterium pharaonis).